A 1272-amino-acid chain; its full sequence is AF4/FMR2 family member 2 (1272 aa).

7 disordered regions span residues 151 to 190, 204 to 231, 372 to 401, 422 to 497, 557 to 694, 715 to 743, and 772 to 899; these read SNRK…DPPQ, PQIG…DTFK, TLQK…EDDL, KAKP…QLDK, IREK…ETLQ, TLST…PAMQ, and PGQN…QDKN. Basic and acidic residues predominate over residues 155–164; the sequence is SKSEWPRDSH. Over residues 165 to 179 the composition is skewed to low complexity; the sequence is NTSPAQASQTSSQPN. Polar residues predominate over residues 180 to 189; that stretch reads KMQTSTQDPP. Residues 210–227 show a composition bias toward low complexity; that stretch reads EKSNPSSKEENNPNSGGE. Residues 374-384 show a composition bias toward polar residues; it reads QKWSDPSSRAS. Positions 387-396 are enriched in basic and acidic residues; sequence MLEDDLKLSS. The residue at position 395 (Ser-395) is a Phosphoserine. The span at 436-450 shows a compositional bias: polar residues; that stretch reads TPQSTPATQTNVGSG. The residue at position 482 (Thr-482) is a Phosphothreonine. The segment covering 580 to 590 has biased composition (polar residues); it reads STSVDTVSQRT. Over residues 620–633 the composition is skewed to basic and acidic residues; it reads PKEKGSVELPDPPR. Basic residues predominate over residues 634 to 644; sequence SRNKATAHKPV. Low complexity predominate over residues 715–734; the sequence is TLSTLTNGNSNNLSTSNEET. Residues 815 to 831 are compositionally biased toward basic and acidic residues; the sequence is PAETAEKIPEKKQRLED. Over residues 841–850 the composition is skewed to pro residues; it reads CISPAPPHKP. Positions 887-899 are enriched in polar residues; that stretch reads VSGNNGHFGQDKN.

The protein belongs to the AF4 family. Highly expressed in the hippocampus, the piriform cortex, Purkinje cells and the cingulate gyrus.

The protein resides in the nucleus speckle. In terms of biological role, RNA-binding protein. Might be involved in alternative splicing regulation through an interaction with G-quartet RNA structure. The sequence is that of AF4/FMR2 family member 2 from Mus musculus (Mouse).